The chain runs to 308 residues: Putative mitochondrial transporter UCP3 (308 aa).

Topologically, residues 1 to 10 (MVGLQPSEVP) are mitochondrial intermembrane. Residues 11-32 (PTTVVKFLGAGTAACFADLLTF) form a helical membrane-spanning segment. Solcar repeat units follow at residues 11–102 (PTTV…VKQF), 111–202 (SSVA…IKEK), and 211–296 (DNFP…LKRA). Over 33-73 (PLDTAKVRLQIQGENPGVQSVQYRGVLGTILTMVRTEGPRS) the chain is Mitochondrial matrix. A helical transmembrane segment spans residues 74–96 (PYSGLVAGLHRQMSFASIRIGLY). Topologically, residues 97–116 (DSVKQFYTPKGTDHSSVAIR) are mitochondrial intermembrane. Residues 117-133 (ILAGCTTGAMAVTCAQP) traverse the membrane as a helical segment. Topologically, residues 134 to 179 (TDVVKVRFQAMIRLGTGGERKYRGTMDAYRTIAREEGVRGLWKGTW) are mitochondrial matrix. A helical membrane pass occupies residues 180–196 (PNITRNAIVNCAEMVTY). Residues 197–213 (DIIKEKLLDSHLFTDNF) lie on the Mitochondrial intermembrane side of the membrane. A helical membrane pass occupies residues 214–233 (PCHFVSAFGAGFCATVVASP). The Mitochondrial matrix portion of the chain corresponds to 234-267 (VDVVKTRYMNAPPGRYRSPLHCMLRMVAQEGPTA). The chain crosses the membrane as a helical span at residues 268–290 (FYKGFMPSFLRLGSWNVMMFVTY). Residues 275-297 (SFLRLGSWNVMMFVTYEQLKRAL) form a purine nucleotide binding region. Residues 291 to 308 (EQLKRALMKVQVLRESPF) are Mitochondrial intermembrane-facing.

It belongs to the mitochondrial carrier (TC 2.A.29) family. Interacts with HAX1; the interaction is direct and calcium-dependent.

Its subcellular location is the mitochondrion inner membrane. Its function is as follows. Putative transmembrane transporter that plays a role in mitochondrial metabolism via an as yet unclear mechanism. Originally, this mitochondrial protein was thought to act as a proton transmembrane transporter from the mitochondrial intermembrane space into the matrix, causing proton leaks through the inner mitochondrial membrane, thereby uncoupling mitochondrial membrane potential generation from ATP synthesis. However, this function is controversial and uncoupling may not be the function, or at least not the main function, but rather a consequence of more conventional metabolite transporter activity. This Rattus norvegicus (Rat) protein is Putative mitochondrial transporter UCP3.